We begin with the raw amino-acid sequence, 188 residues long: dCTP deaminase (188 aa).

DCTP contacts are provided by residues 111–116 (KSTYAR), 135–137 (TLE), Q156, Y170, and Q180. Catalysis depends on E137, which acts as the Proton donor/acceptor.

This sequence belongs to the dCTP deaminase family. As to quaternary structure, homotrimer.

The enzyme catalyses dCTP + H2O + H(+) = dUTP + NH4(+). Its pathway is pyrimidine metabolism; dUMP biosynthesis; dUMP from dCTP (dUTP route): step 1/2. Catalyzes the deamination of dCTP to dUTP. The sequence is that of dCTP deaminase from Chromohalobacter salexigens (strain ATCC BAA-138 / DSM 3043 / CIP 106854 / NCIMB 13768 / 1H11).